Here is a 257-residue protein sequence, read N- to C-terminus: Acetylglutamate kinase (257 aa).

Substrate contacts are provided by residues 43–44 (GG), Arg65, and Asn157. Residues 180-185 (DVSGIL) and 208-210 (IIT) each bind ATP.

The protein belongs to the acetylglutamate kinase family. ArgB subfamily. As to quaternary structure, homodimer.

The protein localises to the cytoplasm. It catalyses the reaction N-acetyl-L-glutamate + ATP = N-acetyl-L-glutamyl 5-phosphate + ADP. The protein operates within amino-acid biosynthesis; L-arginine biosynthesis; N(2)-acetyl-L-ornithine from L-glutamate: step 2/4. Catalyzes the ATP-dependent phosphorylation of N-acetyl-L-glutamate. The protein is Acetylglutamate kinase of Salmonella agona (strain SL483).